Consider the following 206-residue polypeptide: Delta and osm-11 homolog protein 1 (206 aa).

This chain is Delta and osm-11 homolog protein 1 (dos-1), found in Caenorhabditis elegans.